We begin with the raw amino-acid sequence, 512 residues long: Sucrose-6-phosphate hydrolase (512 aa).

Substrate-binding positions include 40–43, glutamine 59, tryptophan 67, 102–103, 165–166, glutamate 229, and tryptophan 311; these read WMND, FS, and RD. The active site involves aspartate 43.

The protein belongs to the glycosyl hydrolase 32 family.

Its subcellular location is the cytoplasm. It carries out the reaction Hydrolysis of terminal non-reducing beta-D-fructofuranoside residues in beta-D-fructofuranosides.. Its pathway is glycan biosynthesis; sucrose metabolism. This chain is Sucrose-6-phosphate hydrolase (sacA), found in Zymomonas mobilis subsp. mobilis (strain ATCC 31821 / ZM4 / CP4).